We begin with the raw amino-acid sequence, 162 residues long: MNVTATARSLLLTEFVSAFFLAMRYFFKPKPTINYPFEKNPISPRFRGEHALRRYPNGEERCIACKLCEAVCPAQAITIEAGPRRNDGTRRTVRYDIDMVKCIYCGFCQEACPVDAIVEGPNFEFATETREELYYDKARLLANGDRWEREIAKAISLDAPYR.

2 4Fe-4S ferredoxin-type domains span residues 52–82 and 93–122; these read LRRY…IEAG and VRYD…EGPN. [4Fe-4S] cluster is bound by residues Cys62, Cys65, Cys68, Cys72, Cys102, Cys105, Cys108, and Cys112.

Belongs to the complex I 23 kDa subunit family. In terms of assembly, NDH-1 is composed of 14 different subunits. Subunits NuoA, H, J, K, L, M, N constitute the membrane sector of the complex. It depends on [4Fe-4S] cluster as a cofactor.

It is found in the cell inner membrane. The enzyme catalyses a quinone + NADH + 5 H(+)(in) = a quinol + NAD(+) + 4 H(+)(out). NDH-1 shuttles electrons from NADH, via FMN and iron-sulfur (Fe-S) centers, to quinones in the respiratory chain. The immediate electron acceptor for the enzyme in this species is believed to be ubiquinone. Couples the redox reaction to proton translocation (for every two electrons transferred, four hydrogen ions are translocated across the cytoplasmic membrane), and thus conserves the redox energy in a proton gradient. The chain is NADH-quinone oxidoreductase subunit I 1 from Rhodopseudomonas palustris (strain ATCC BAA-98 / CGA009).